A 367-amino-acid polypeptide reads, in one-letter code: Choline-phosphate cytidylyltransferase A (367 aa).

M1 is subject to N-acetylmethionine. The interval M1–K33 is disordered. K8 carries the N6-acetyllysine modification. 4 residues coordinate CTP: I84, F85, H92, and K122. Phosphocholine-binding residues include K122 and W151. 7 residues coordinate CTP: H168, D169, Y173, Q195, R196, T197, and I200. Amphipathic regions lie at residues K228–G287 and A298–S315. S233 bears the Phosphoserine mark. The autoinhibitory (AI) stretch occupies residues I272 to F293. The disordered stretch occupies residues A313–D367. S315, S319, S321, S322, and S323 each carry phosphoserine. Copy 1 of the repeat occupies S319–P324. A compositionally biased stretch (low complexity) spans S319–S339. T325 bears the Phosphothreonine mark. 3 positions are modified to phosphoserine: S329, S331, and S333. The 2; approximate repeat unit spans residues S329–S333. T342 carries the post-translational modification Phosphothreonine. Phosphoserine occurs at positions 343, 347, 352, and 362. Residues S343–P348 form repeat 3.

The protein belongs to the cytidylyltransferase family. As to quaternary structure, homodimer. Post-translationally, the serine residues of the C-terminus are phosphorylated. The inactive soluble form is stabilized by phosphorylation, the active membrane bound form is promoted by anionic lipids or diacylglycerol, and is stabilized by dephosphorylation. Monoubiquitinated by the SCF(FBXL2) complex, leading to proteasomal degradation. As to expression, brain, placenta, liver, fetal and adult lung.

The protein resides in the cytoplasm. It localises to the cytosol. It is found in the membrane. The protein localises to the endoplasmic reticulum membrane. Its subcellular location is the nucleus. The catalysed reaction is phosphocholine + CTP + H(+) = CDP-choline + diphosphate. Its pathway is phospholipid metabolism; phosphatidylcholine biosynthesis; phosphatidylcholine from phosphocholine: step 1/2. Its activity is regulated as follows. Interconverts between an inactive cytosolic form and an active membrane-bound form. Activation involves disruption of an inhibitory interaction between helices at the base of the active site and the autoinhibitory (AI) region. Activated by anionic lipid vesicles and by oleic acid or diacylglycerol-containing phosphatidylcholine vesicles. Its function is as follows. Catalyzes the key rate-limiting step in the CDP-choline pathway for phosphatidylcholine biosynthesis. In Homo sapiens (Human), this protein is Choline-phosphate cytidylyltransferase A (PCYT1A).